We begin with the raw amino-acid sequence, 409 residues long: Peptidase T (409 aa).

His-80 contacts Zn(2+). Asp-82 is an active-site residue. Asp-143 contributes to the Zn(2+) binding site. Glu-177 serves as the catalytic Proton acceptor. 3 residues coordinate Zn(2+): Glu-178, Asp-200, and His-382.

The protein belongs to the peptidase M20B family. It depends on Zn(2+) as a cofactor.

Its subcellular location is the cytoplasm. The enzyme catalyses Release of the N-terminal residue from a tripeptide.. Functionally, cleaves the N-terminal amino acid of tripeptides. In Alkaliphilus oremlandii (strain OhILAs) (Clostridium oremlandii (strain OhILAs)), this protein is Peptidase T.